The primary structure comprises 968 residues: Phosphoenolpyruvate carboxylase (968 aa).

Residue S11 is modified to Phosphoserine. Catalysis depends on residues H172 and K602.

The protein belongs to the PEPCase type 1 family. In terms of assembly, homotetramer. Mg(2+) serves as cofactor.

It is found in the cytoplasm. It carries out the reaction oxaloacetate + phosphate = phosphoenolpyruvate + hydrogencarbonate. Its activity is regulated as follows. By light-reversible phosphorylation. Through the carboxylation of phosphoenolpyruvate (PEP) it forms oxaloacetate, a four-carbon dicarboxylic acid source for the tricarboxylic acid cycle. The sequence is that of Phosphoenolpyruvate carboxylase from Phaseolus vulgaris (Kidney bean).